A 333-amino-acid polypeptide reads, in one-letter code: uncharacterized protein (333 aa).

This is an uncharacterized protein from Ictalurid herpesvirus 1 (strain Auburn) (IcHV-1).